The following is a 927-amino-acid chain: Probable dipeptidyl-aminopeptidase B (927 aa).

2 disordered regions span residues 1–44 (MAPA…TTSI) and 58–101 (GHFE…KNDG). The Cytoplasmic segment spans residues 1-108 (MAPAPGMAPY…NDGMNRGMRR (108 aa)). 2 stretches are compositionally biased toward basic and acidic residues: residues 19–36 (HRPE…HESE) and 58–70 (GHFE…PMKE). A helical; Signal-anchor for type II membrane protein transmembrane segment spans residues 109–129 (TLIIVAGLLISAWVVGLFFYV). Over 130-927 (SHKSYKPASQ…RSIQPILPIL (798 aa)) the chain is Vacuolar. 2 N-linked (GlcNAc...) asparagine glycosylation sites follow: Asn-365 and Asn-530. The active-site Charge relay system is Ser-769. Asn-828 carries an N-linked (GlcNAc...) asparagine glycan. Catalysis depends on charge relay system residues Asp-846 and His-879.

This sequence belongs to the peptidase S9B family.

It is found in the vacuole membrane. The catalysed reaction is Release of an N-terminal dipeptide, Xaa-Yaa-|-Zaa-, from a polypeptide, preferentially when Yaa is Pro, provided Zaa is neither Pro nor hydroxyproline.. In terms of biological role, type IV dipeptidyl-peptidase which removes N-terminal dipeptides sequentially from polypeptides having unsubstituted N-termini provided that the penultimate residue is proline. This is Probable dipeptidyl-aminopeptidase B (DAPB) from Podospora anserina (strain S / ATCC MYA-4624 / DSM 980 / FGSC 10383) (Pleurage anserina).